The primary structure comprises 378 residues: uncharacterized protein (378 aa).

Zn(2+) contacts are provided by Cys-38, His-60, Cys-90, Cys-93, Cys-96, and Cys-104.

Belongs to the zinc-containing alcohol dehydrogenase family. Class-III subfamily. Zn(2+) is required as a cofactor.

This is an uncharacterized protein from Bacillus subtilis (strain 168).